Consider the following 406-residue polypeptide: Acetate kinase (406 aa).

N7 contacts Mg(2+). K14 lines the ATP pocket. R90 provides a ligand contact to substrate. The active-site Proton donor/acceptor is the D147. ATP-binding positions include 207–211 (HLGNG), 283–285 (DMR), and 331–335 (GVGEN). E385 serves as a coordination point for Mg(2+).

The protein belongs to the acetokinase family. In terms of assembly, homodimer. It depends on Mg(2+) as a cofactor. Mn(2+) serves as cofactor.

It is found in the cytoplasm. It carries out the reaction acetate + ATP = acetyl phosphate + ADP. It functions in the pathway metabolic intermediate biosynthesis; acetyl-CoA biosynthesis; acetyl-CoA from acetate: step 1/2. Its function is as follows. Catalyzes the formation of acetyl phosphate from acetate and ATP. Can also catalyze the reverse reaction. This chain is Acetate kinase, found in Thermosipho africanus (strain TCF52B).